The following is a 233-amino-acid chain: ATP synthase subunit C lysine N-methyltransferase (233 aa).

M1 is modified (N-acetylmethionine). The helical transmembrane segment at 38 to 58 threads the bilayer; the sequence is FLLTGLVGGTLVAVYAVATPF. The tract at residues 56-90 is required for mitochondrial location; the sequence is TPFVTPALRKVCLPFVPATTKQIENVVKMLRCRRG.

The protein belongs to the ANT/ATPSC lysine N-methyltransferase family. Ubiquitously expressed.

Its subcellular location is the mitochondrion membrane. The catalysed reaction is L-lysyl-[protein] + 3 S-adenosyl-L-methionine = N(6),N(6),N(6)-trimethyl-L-lysyl-[protein] + 3 S-adenosyl-L-homocysteine + 3 H(+). Mitochondrial protein-lysine N-methyltransferase that trimethylates ATP synthase subunit C, ATP5MC1 and ATP5MC2. Trimethylation is required for proper incorporation of the C subunit into the ATP synthase complex and mitochondrial respiration. Promotes chronic pain. Involved in persistent inflammatory and neuropathic pain: methyltransferase activity in the mitochondria of sensory neurons promotes chronic pain via a pathway that depends on the production of reactive oxygen species (ROS) and on the engagement of spinal cord microglia. The sequence is that of ATP synthase subunit C lysine N-methyltransferase from Homo sapiens (Human).